The sequence spans 317 residues: Transaldolase (317 aa).

Lys126 serves as the catalytic Schiff-base intermediate with substrate.

The protein belongs to the transaldolase family. Type 1 subfamily. As to quaternary structure, homodimer.

It localises to the cytoplasm. It carries out the reaction D-sedoheptulose 7-phosphate + D-glyceraldehyde 3-phosphate = D-erythrose 4-phosphate + beta-D-fructose 6-phosphate. Its pathway is carbohydrate degradation; pentose phosphate pathway; D-glyceraldehyde 3-phosphate and beta-D-fructose 6-phosphate from D-ribose 5-phosphate and D-xylulose 5-phosphate (non-oxidative stage): step 2/3. Functionally, transaldolase is important for the balance of metabolites in the pentose-phosphate pathway. The polypeptide is Transaldolase (Burkholderia orbicola (strain AU 1054)).